A 319-amino-acid chain; its full sequence is Probable cystathionine gamma-synthase (319 aa).

An N6-(pyridoxal phosphate)lysine modification is found at K197.

It belongs to the trans-sulfuration enzymes family. As to quaternary structure, homotetramer. Requires pyridoxal 5'-phosphate as cofactor.

The protein localises to the cytoplasm. The enzyme catalyses O-succinyl-L-homoserine + L-cysteine = L,L-cystathionine + succinate + H(+). Its function is as follows. Catalyzes the formation of L-cystathionine from O-succinyl-L-homoserine (OSHS) and L-cysteine, via a gamma-replacement reaction. In the absence of thiol, catalyzes gamma-elimination to form 2-oxobutanoate, succinate and ammonia. The protein is Probable cystathionine gamma-synthase (metB) of Herpetosiphon aurantiacus (Herpetosiphon giganteus).